The following is a 491-amino-acid chain: Non-structural protein 1 (491 aa).

Residues 1–81 (MATFKDACYH…CFLDEEPHLL (81 aa)) form an RNA-binding region. Positions 42 to 79 (CLDCCQYTNLTYCRGCALYHVCQWCSQYNRCFLDEEPH) are zinc-binding domain. An important for cytoskeleton localization region spans residues 82–176 (RMRTFKDVIT…ENQTPFQFIN (95 aa)). The tract at residues 320–491 (NVHNCRWCQI…EYDLELSDVE (172 aa)) is interaction with host IRF3. A pLxIS motif motif is present at residues 485-488 (LELS).

This sequence belongs to the rotavirus NSP1 family. In terms of assembly, interacts (via C-terminus) with host IRF3; this interaction leads to IRF3 degradation. Interacts with host IRF7; this interaction leads to IRF7 degradation. Interacts with host CUL1 and CUL3.

The protein resides in the host cytoplasm. The protein localises to the host cytoskeleton. In terms of biological role, plays a role in the inhibition of host innate immunity by inducing the degradation of key host factors required to activate interferon production such as IRF3, IRF5 or IRF7. Associates with components of cullin RING ligases (CRLs) including CUL1 or CUL3, which are essential multisubunit ubiquitination complexes, to modulate their activities. This is Non-structural protein 1 from Bos taurus (Bovine).